Here is a 189-residue protein sequence, read N- to C-terminus: UPF0494 membrane protein C977.06 (189 aa).

3 helical membrane passes run 78 to 98 (WPLL…NFEV), 120 to 140 (IWGP…GLIY), and 148 to 168 (AIPL…VAMV).

This sequence belongs to the UPF0494 family.

The protein localises to the membrane. This chain is UPF0494 membrane protein C977.06, found in Schizosaccharomyces pombe (strain 972 / ATCC 24843) (Fission yeast).